We begin with the raw amino-acid sequence, 344 residues long: Axoneme-associated protein mst101(1) (344 aa).

Repeat copies occupy residues 74–89 (KKKCAEAAKKEKEAAE), 90–105 (KKKCAEAAKKEKEAAE), 106–121 (KKKCAEAAKKEKEAAE), 122–137 (KKKCAEAAKKEKEAAE), 138–153 (KKKCAEAAKKEKEAAE), 154–169 (KKKCAEAAKKEKEAAE), 170–185 (KKKCAEAAQKKKCAEL), 186–201 (AKKEQEAAEKKKCAEA), 202–217 (AKKEKEAAEKKKCEER), 218–233 (AKKEKEAAEKKKCEER), 234–249 (AKKEKEAAEKKKCAEA), and 250–265 (AKKEKEAAEKKKCAEA). The 17 X 16 AA approximate tandem repeats of K-K-K-C-X-E-X-A-[KQ]-K-X-X-E-X-A-X stretch occupies residues 74–344 (KKKCAEAAKK…AAQKKCEPKK (271 aa)). A disordered region spans residues 206–244 (KEAAEKKKCEERAKKEKEAAEKKKCEERAKKEKEAAEKK). Residues 266-281 (AQKKKCAELAKKAKEA) form a 13; approximate repeat. One copy of the 14; approximate repeat lies at 282–297 (AEKKKCAKKAGEKGSK). Residues 285–315 (KKCAKKAGEKGSKQSGSDKGKKNGKKNDMKN) show a composition bias toward basic and acidic residues. Residues 285 to 318 (KKCAKKAGEKGSKQSGSDKGKKNGKKNDMKNKCA) are disordered. The 15; approximate repeat unit spans residues 298 to 313 (QSGSDKGKKNGKKNDM). Residues 314 to 329 (KNKCAMLAKKAKEEAL) form repeat 16. One copy of the 17; truncated repeat lies at 330–344 (KKKCAAAQKKCEPKK).

As to expression, testis. Located in spermatocytes and spermatid bundles.

It localises to the cytoplasm. Its function is as follows. Possible structural role in the sperm tail. It is associated with axonemal structures. This chain is Axoneme-associated protein mst101(1) (mst101(1)), found in Drosophila hydei (Fruit fly).